The primary structure comprises 490 residues: Betaine aldehyde dehydrogenase (490 aa).

Residues S26, I27, and D93 each contribute to the K(+) site. Residue G150 to W152 coordinates NAD(+). Catalysis depends on K162, which acts as the Charge relay system. NAD(+) is bound at residue K176–E179. V180 lines the K(+) pocket. G230 to T233 lines the NAD(+) pocket. K(+) is bound at residue L246. The active-site Proton acceptor is the E252. NAD(+)-binding residues include G254, C286, and E387. The Nucleophile role is filled by C286. C286 is subject to Cysteine sulfenic acid (-SOH). K(+)-binding residues include K457 and G460. Catalysis depends on E464, which acts as the Charge relay system.

It belongs to the aldehyde dehydrogenase family. In terms of assembly, dimer of dimers. K(+) is required as a cofactor.

It carries out the reaction betaine aldehyde + NAD(+) + H2O = glycine betaine + NADH + 2 H(+). It functions in the pathway amine and polyamine biosynthesis; betaine biosynthesis via choline pathway; betaine from betaine aldehyde: step 1/1. Its function is as follows. Involved in the biosynthesis of the osmoprotectant glycine betaine. Catalyzes the irreversible oxidation of betaine aldehyde to the corresponding acid. The chain is Betaine aldehyde dehydrogenase from Stutzerimonas stutzeri (strain A1501) (Pseudomonas stutzeri).